Consider the following 360-residue polypeptide: Phospho-N-acetylmuramoyl-pentapeptide-transferase (360 aa).

The next 10 helical transmembrane spans lie at 21–41 (YLTF…LWIG), 73–93 (TMGG…WGDL), 94–114 (SNPY…IGFV), 132–152 (WKYF…YALG), 168–188 (IMPQ…VGTS), 199–219 (GLAI…AWAT), 239–259 (LVIF…FNTY), 263–283 (VFMG…IAVL), 288–308 (FLLV…ILQV), and 338–358 (VIIR…VTLK).

This sequence belongs to the glycosyltransferase 4 family. MraY subfamily. The cofactor is Mg(2+).

It localises to the cell inner membrane. The catalysed reaction is UDP-N-acetyl-alpha-D-muramoyl-L-alanyl-gamma-D-glutamyl-meso-2,6-diaminopimeloyl-D-alanyl-D-alanine + di-trans,octa-cis-undecaprenyl phosphate = di-trans,octa-cis-undecaprenyl diphospho-N-acetyl-alpha-D-muramoyl-L-alanyl-D-glutamyl-meso-2,6-diaminopimeloyl-D-alanyl-D-alanine + UMP. It participates in cell wall biogenesis; peptidoglycan biosynthesis. Catalyzes the initial step of the lipid cycle reactions in the biosynthesis of the cell wall peptidoglycan: transfers peptidoglycan precursor phospho-MurNAc-pentapeptide from UDP-MurNAc-pentapeptide onto the lipid carrier undecaprenyl phosphate, yielding undecaprenyl-pyrophosphoryl-MurNAc-pentapeptide, known as lipid I. The sequence is that of Phospho-N-acetylmuramoyl-pentapeptide-transferase from Mannheimia succiniciproducens (strain KCTC 0769BP / MBEL55E).